The sequence spans 1525 residues: Dicer-like protein 1 (1525 aa).

The span at 37 to 52 (DLQEDDGSSDESDNDE) shows a compositional bias: acidic residues. The segment at 37 to 65 (DLQEDDGSSDESDNDEREDHSKTGVSQQR) is disordered. The Helicase ATP-binding domain maps to 124–305 (LFERAKVQNT…DEATRLEKLL (182 aa)). Residue 137–144 (LDTGSGKT) coordinates ATP. The DEAH box signature appears at 250–253 (DEAH). The Helicase C-terminal domain occupies 439 to 605 (QLSPKVQVLR…SFCRTLPEDR (167 aa)). In terms of domain architecture, Dicer dsRNA-binding fold spans 641 to 731 (ATAILARYAS…NSIYHRRLPA (91 aa)). One can recognise a PAZ domain in the interval 881 to 1009 (ESLTYVRDND…ICIEPLKVSA (129 aa)). 2 consecutive RNase III domains span residues 1032–1192 (LISL…LSGG) and 1243–1394 (SRKI…VDSD). Positions 1283, 1380, and 1383 each coordinate Mg(2+). The region spanning 1428 to 1496 (TFLHNRLTNE…SEKALAVLDE (69 aa)) is the DRBM domain. Positions 1440, 1467, 1508, and 1510 each coordinate Zn(2+).

This sequence belongs to the helicase family. Dicer subfamily. Mg(2+) is required as a cofactor. It depends on Mn(2+) as a cofactor.

Functionally, dicer-like endonuclease involved in cleaving double-stranded RNA in the RNA interference (RNAi) pathway. Produces 21 to 25 bp dsRNAs (siRNAs) which target the selective destruction of homologous RNAs leading to sequence-specific suppression of gene expression, called post-transcriptional gene silencing (PTGS). Part of a broad host defense response against viral infection and transposons. The protein is Dicer-like protein 1 (dcl1) of Aspergillus niger (strain ATCC MYA-4892 / CBS 513.88 / FGSC A1513).